The chain runs to 455 residues: RTGSCANGDDIILAVKGEDVWLYDTLSASFAELGLNYNFDERTKKREELWFMSHQAMLVDGIYIPKLEPERIVSILEWDRSKELMHRTEAICAAMIEAWGYTELLQEIRKFYLWLLSKDEFKELAASGKAPYIAETALRKLYTNVNTQPNELQRYLEVLDFNHIDGCCESVSLQSGKETVENLDAGKESKKETSDKGNKPQNSQVGQGSKEPTKTGTVSKDVNVGSKGKEVPRLQKITKKMNLPTVGGKIILGLDHLLEYKPNQVDLFNTRATKTQFESWYSAVKVEYDLNDEQMGVIMNGFMVWCIDNGTSPDVNGVWVMMDGEEQVEYPLKPIVENAKPTLRQIMHHFSDAAEAYIEMRNSESPYMPRYGLLRNLRDRELARYAFDFYEVTSKTPNRAREAIAQMKAAALAGINSRLFGLDGNISTNSENTERHTARDVNQNMHTLLGMGPPQ.

Cys-5 functions as the For nuclear inclusion protein A activity in the catalytic mechanism. Basic and acidic residues predominate over residues 182 to 198 (NLDAGKESKKETSDKGN). The tract at residues 182-225 (NLDAGKESKKETSDKGNKPQNSQVGQGSKEPTKTGTVSKDVNVG) is disordered.

It belongs to the potyviridae genome polyprotein family. Genome polyprotein of potyviruses undergoes post-translational proteolytic processing by the main proteinase NIa-pro resulting in the production of at least ten individual proteins. The P1 proteinase and the HC-pro cleave only their respective C-termini autocatalytically. 6K1 is essential for proper proteolytic separation of P3 from CI.

Its subcellular location is the virion. It carries out the reaction RNA(n) + a ribonucleoside 5'-triphosphate = RNA(n+1) + diphosphate. In terms of biological role, an RNA-dependent RNA polymerase that plays an essential role in the virus replication. Its function is as follows. Involved in aphid transmission, cell-to-cell and systemis movement, encapsidation of the viral RNA and in the regulation of viral RNA amplification. The polypeptide is Genome polyprotein (Citrullus lanatus (Watermelon)).